Consider the following 372-residue polypeptide: MDAALLLNVEGVKKTILHGGTGELPNFITGSRVIFHFRTMKCDEERTVIDDSRQVDQPMHIIIGNMFKLEVWEILLTSMRVHEVAEFWCDTIHTGVYPILSRSLRQMAQGKDPTEWHVHTCGLANMFAYHTLGYEDLDELQKEPQPLIFVIELLQVDAPSDYQRETWNLSNHEKMKVVPVLHGEGNRLFKLGRYEEASSKYQEAIICLRNLQTKEKPWEVQWLKLEKMINTLTLNYCQCLLKKEEYYEVLEHTSDILRHHPGIVKAYYVRARAHAEVWNEAEAKADLQKVLELEPSMQKAVRRELRLLENRMAEKQEEERLRCRNMLSQGATQPPTEPPAEPHTAPPAELSTGPPAEPPAELPLSPGHSLQH.

One can recognise a PPIase FKBP-type domain in the interval 53-145; sequence RQVDQPMHII…DLDELQKEPQ (93 aa). 3 TPR repeats span residues 178 to 211, 230 to 263, and 264 to 297; these read VPVL…LRNL, NTLT…HPGI, and VKAY…EPSM. Residues 315–372 are disordered; it reads KQEEERLRCRNMLSQGATQPPTEPPAEPHTAPPAELSTGPPAEPPAELPLSPGHSLQH. The segment covering 335 to 345 has biased composition (pro residues); that stretch reads PTEPPAEPHTA.

In terms of assembly, interacts with NUB1.

The protein resides in the cytoplasm. It is found in the nucleus. Its function is as follows. May be important in protein trafficking and/or protein folding and stabilization. The chain is Aryl-hydrocarbon-interacting protein-like 1 (AIPL1) from Papio cynocephalus (Yellow baboon).